Here is a 312-residue protein sequence, read N- to C-terminus: Putative olfactory receptor 1F2 (312 aa).

Residues 1–25 lie on the Extracellular side of the membrane; the sequence is MERDKPVSVSEFLLLGLSRQPQQQH. The chain crosses the membrane as a helical span at residues 26-49; that stretch reads LLFVFFLSMYLATVLGNLLIILAI. The Cytoplasmic segment spans residues 50 to 57; it reads SIDSRLHT. The chain crosses the membrane as a helical span at residues 58–78; the sequence is PMYFFLSNMSFVDNCFSTTVP. The Extracellular segment spans residues 79 to 99; it reads KMLANHILRTQTISFSGCLMQ. A disulfide bridge connects residues Cys-96 and Cys-188. The helical transmembrane segment at 100–119 threads the bilayer; the sequence is MYFISELADMDNFLLAVMAY. Residues 120–138 lie on the Cytoplasmic side of the membrane; the sequence is DRFVAVCRPLHYTAKMIHQ. Residues 139-157 traverse the membrane as a helical segment; sequence LCALLVTGSWVVANSNALL. Over 158–195 the chain is Extracellular; it reads HTLLMARLSFCADNTIPHIFCDVTPLLKLSCSDTHLSE. A helical transmembrane segment spans residues 196-218; it reads VMILTEAALVTITPFLCLLASYM. Residues 219–235 are Cytoplasmic-facing; the sequence is HITCVVLRVPSTKGRWK. A helical transmembrane segment spans residues 236 to 258; the sequence is AFSTCGSHLAVVLLFYGTIMSPY. Topologically, residues 259–271 are extracellular; sequence FRTSSSHSAQRDI. Residues 272–291 traverse the membrane as a helical segment; the sequence is AAAVRFTVVTPVMNPLIYSL. Over 292-312 the chain is Cytoplasmic; sequence RNKDIKGALVKVVAVKFFSVQ.

Belongs to the G-protein coupled receptor 1 family.

It is found in the cell membrane. In terms of biological role, odorant receptor. The chain is Putative olfactory receptor 1F2 (OR1F2P) from Homo sapiens (Human).